The following is a 154-amino-acid chain: Low molecular weight protein-tyrosine-phosphatase PtpA (154 aa).

The active-site Nucleophile is the Cys8. Arg14 is a catalytic residue. Asp120 serves as the catalytic Proton donor.

It belongs to the low molecular weight phosphotyrosine protein phosphatase family.

The enzyme catalyses O-phospho-L-tyrosyl-[protein] + H2O = L-tyrosyl-[protein] + phosphate. Its function is as follows. Dephosphorylates the phosphotyrosine-containing proteins. The chain is Low molecular weight protein-tyrosine-phosphatase PtpA (ptpA) from Staphylococcus epidermidis (strain ATCC 35984 / DSM 28319 / BCRC 17069 / CCUG 31568 / BM 3577 / RP62A).